Consider the following 180-residue polypeptide: Large ribosomal subunit protein uL5 (180 aa).

It belongs to the universal ribosomal protein uL5 family. Part of the 50S ribosomal subunit; part of the 5S rRNA/L5/L18/L25 subcomplex. Contacts the 5S rRNA and the P site tRNA. Forms a bridge to the 30S subunit in the 70S ribosome.

In terms of biological role, this is one of the proteins that bind and probably mediate the attachment of the 5S RNA into the large ribosomal subunit, where it forms part of the central protuberance. In the 70S ribosome it contacts protein S13 of the 30S subunit (bridge B1b), connecting the 2 subunits; this bridge is implicated in subunit movement. Contacts the P site tRNA; the 5S rRNA and some of its associated proteins might help stabilize positioning of ribosome-bound tRNAs. This chain is Large ribosomal subunit protein uL5, found in Spiroplasma kunkelii.